The following is a 130-amino-acid chain: Large ribosomal subunit protein bL19 (130 aa).

It belongs to the bacterial ribosomal protein bL19 family.

In terms of biological role, this protein is located at the 30S-50S ribosomal subunit interface and may play a role in the structure and function of the aminoacyl-tRNA binding site. This Mycoplasma mycoides subsp. mycoides SC (strain CCUG 32753 / NCTC 10114 / PG1) protein is Large ribosomal subunit protein bL19.